Here is a 393-residue protein sequence, read N- to C-terminus: MDKKVYQCTVSAPVNIAVIKYWGKRDVALNLPTNSSISVTLSQDDLRTVTTASCSEKFENDTLWLNGNAEEIFANKRLRVCVEELRKARLDLEEENDDLDKIGALKLHVVSENNFPTAAGLASSAAGYAAFCEAIARLYDLPWTPTQLSRIARQGSGSACRSLFGGYVAWEMGELHSGADSVAVQVEPVENWPEIRVAVLVASAAKKGVSSTAGMQATVASSTLFQHRIQNIVPQRIQEMKTAIRERDFETFAKLTMTDSNQFHACCLDTFPPIFYLNDTSRAVIRVVENINATAGKTIAAYTFDAGPNAVIYFLEENSEIVLNTLYAVTKNAEGWSKQYGSSPVTVDSAAANIVSSGISRVILTRVGNGPRVLTIDESLIDASGNPKFIGSH.

Residues 21 to 24 (YWGK), Arg77, 156 to 161 (SGSACR), and Thr212 each bind (R)-5-diphosphomevalonate.

It belongs to the diphosphomevalonate decarboxylase family. Homodimer.

The protein resides in the cytoplasm. Its subcellular location is the nucleus. The enzyme catalyses (R)-5-diphosphomevalonate + ATP = isopentenyl diphosphate + ADP + phosphate + CO2. It participates in isoprenoid biosynthesis; isopentenyl diphosphate biosynthesis via mevalonate pathway; isopentenyl diphosphate from (R)-mevalonate: step 3/3. Its function is as follows. Diphosphomevalonate decarboxylase; part of the second module of ergosterol biosynthesis pathway that includes the middle steps of the pathway. Mvd1 converts diphosphomevalonate into isopentenyl diphosphate. The second module is carried out in the vacuole and involves the formation of farnesyl diphosphate, which is also an important intermediate in the biosynthesis of ubiquinone, dolichol, heme and prenylated proteins. Activity by the mevalonate kinase erg12 first converts mevalonate into 5-phosphomevalonate. 5-phosphomevalonate is then further converted to 5-diphosphomevalonate by the phosphomevalonate kinase erg8. The diphosphomevalonate decarboxylase mvd1 then produces isopentenyl diphosphate. The isopentenyl-diphosphate delta-isomerase idi1 then catalyzes the 1,3-allylic rearrangement of the homoallylic substrate isopentenyl (IPP) to its highly electrophilic allylic isomer, dimethylallyl diphosphate (DMAPP). Finally the farnesyl diphosphate synthase fps1 catalyzes the sequential condensation of isopentenyl pyrophosphate with dimethylallyl pyrophosphate, and then with the resultant geranylpyrophosphate to the ultimate product farnesyl pyrophosphate. The protein is Diphosphomevalonate decarboxylase (mvd1) of Schizosaccharomyces pombe (strain 972 / ATCC 24843) (Fission yeast).